The sequence spans 239 residues: Flagellar L-ring protein (239 aa).

An N-terminal signal peptide occupies residues 1–16; the sequence is MKPVILATASALLLAA. Cys-17 carries the N-palmitoyl cysteine lipid modification. The S-diacylglycerol cysteine moiety is linked to residue Cys-17. Over residues 120–138 the composition is skewed to polar residues; it reads SGSTSGSASGNLGLTGDTS. The tract at residues 120–145 is disordered; it reads SGSTSGSASGNLGLTGDTSTDGKGKI.

Belongs to the FlgH family. In terms of assembly, the basal body constitutes a major portion of the flagellar organelle and consists of four rings (L,P,S, and M) mounted on a central rod.

It is found in the cell outer membrane. The protein resides in the bacterial flagellum basal body. Functionally, assembles around the rod to form the L-ring and probably protects the motor/basal body from shearing forces during rotation. The polypeptide is Flagellar L-ring protein (Azorhizobium caulinodans (strain ATCC 43989 / DSM 5975 / JCM 20966 / LMG 6465 / NBRC 14845 / NCIMB 13405 / ORS 571)).